A 363-amino-acid polypeptide reads, in one-letter code: NAD(P)H-quinone oxidoreductase subunit 1, chloroplastic (363 aa).

Helical transmembrane passes span 30 to 50 (LVPI…IVWL), 98 to 118 (FSIG…VIPF), 129 to 149 (VGVF…LMSG), 165 to 185 (AAQS…ISLL), 253 to 273 (FAFF…FVTI), 303 to 323 (TTTE…ISIT), and 336 to 356 (LLNL…LLTT).

Belongs to the complex I subunit 1 family. In terms of assembly, NDH is composed of at least 16 different subunits, 5 of which are encoded in the nucleus.

The protein localises to the plastid. Its subcellular location is the chloroplast thylakoid membrane. The enzyme catalyses a plastoquinone + NADH + (n+1) H(+)(in) = a plastoquinol + NAD(+) + n H(+)(out). The catalysed reaction is a plastoquinone + NADPH + (n+1) H(+)(in) = a plastoquinol + NADP(+) + n H(+)(out). NDH shuttles electrons from NAD(P)H:plastoquinone, via FMN and iron-sulfur (Fe-S) centers, to quinones in the photosynthetic chain and possibly in a chloroplast respiratory chain. The immediate electron acceptor for the enzyme in this species is believed to be plastoquinone. Couples the redox reaction to proton translocation, and thus conserves the redox energy in a proton gradient. In Pelargonium hortorum (Common geranium), this protein is NAD(P)H-quinone oxidoreductase subunit 1, chloroplastic.